Consider the following 232-residue polypeptide: Large ribosomal subunit protein uL1 (232 aa).

It belongs to the universal ribosomal protein uL1 family. In terms of assembly, part of the 50S ribosomal subunit.

Binds directly to 23S rRNA. The L1 stalk is quite mobile in the ribosome, and is involved in E site tRNA release. Functionally, protein L1 is also a translational repressor protein, it controls the translation of the L11 operon by binding to its mRNA. The protein is Large ribosomal subunit protein uL1 of Xanthomonas oryzae pv. oryzae (strain KACC10331 / KXO85).